Consider the following 716-residue polypeptide: Photosystem I P700 chlorophyll a apoprotein A1 (716 aa).

The next 8 membrane-spanning stretches (helical) occupy residues 57–80 (VFSAHFGQLAIILIWLSGMYFHGA), 143–166 (LYCTAIGGLIFAGLMLFAGWFHYH), 182–206 (LNHHLAGLLGLGSLSWAGHQVHVSL), 278–296 (TVHHHLAIAILFLIAGHMY), 333–356 (WHAQLALNLAMLGSLTIVVAHHMY), 372–398 (LSLFTHHMWIGGFLIVGAAAHAAIFMV), 420–442 (AIISHLNWVCIFLGFHSFGLYIH), and 518–536 (FLVHHIHAFTIHVTVLILL). [4Fe-4S] cluster contacts are provided by C560 and C569. The next 2 helical transmembrane spans lie at 576–597 (HVFLGLFWMYNAISVVIFHFSW) and 651–673 (LSAYGLLFLGAHFVWAFSLMFLF). Chlorophyll a' is bound at residue H662. Chlorophyll a is bound by residues M670 and Y678. W679 provides a ligand contact to phylloquinone. A helical membrane pass occupies residues 711–716 (AVGVAH).

It belongs to the PsaA/PsaB family. As to quaternary structure, the PsaA/B heterodimer binds the P700 chlorophyll special pair and subsequent electron acceptors. PSI consists of a core antenna complex that captures photons, and an electron transfer chain that converts photonic excitation into a charge separation. The eukaryotic PSI reaction center is composed of at least 11 subunits. It depends on P700 is a chlorophyll a/chlorophyll a' dimer, A0 is one or more chlorophyll a, A1 is one or both phylloquinones and FX is a shared 4Fe-4S iron-sulfur center. as a cofactor.

The protein localises to the plastid. It is found in the chloroplast thylakoid membrane. It catalyses the reaction reduced [plastocyanin] + hnu + oxidized [2Fe-2S]-[ferredoxin] = oxidized [plastocyanin] + reduced [2Fe-2S]-[ferredoxin]. In terms of biological role, psaA and PsaB bind P700, the primary electron donor of photosystem I (PSI), as well as the electron acceptors A0, A1 and FX. PSI is a plastocyanin-ferredoxin oxidoreductase, converting photonic excitation into a charge separation, which transfers an electron from the donor P700 chlorophyll pair to the spectroscopically characterized acceptors A0, A1, FX, FA and FB in turn. Oxidized P700 is reduced on the lumenal side of the thylakoid membrane by plastocyanin. In Araucaria araucana (Monkey-puzzle tree), this protein is Photosystem I P700 chlorophyll a apoprotein A1.